The sequence spans 203 residues: Ribosomal RNA small subunit methyltransferase G (203 aa).

Residues Gly-73, Leu-78, Val-124–Glu-125, and Arg-139 contribute to the S-adenosyl-L-methionine site.

Belongs to the methyltransferase superfamily. RNA methyltransferase RsmG family.

It is found in the cytoplasm. The catalysed reaction is guanosine(527) in 16S rRNA + S-adenosyl-L-methionine = N(7)-methylguanosine(527) in 16S rRNA + S-adenosyl-L-homocysteine. Functionally, specifically methylates the N7 position of guanine in position 527 of 16S rRNA. This chain is Ribosomal RNA small subunit methyltransferase G, found in Haemophilus influenzae (strain 86-028NP).